Consider the following 223-residue polypeptide: 2-C-methyl-D-erythritol 4-phosphate cytidylyltransferase (223 aa).

This sequence belongs to the IspD/TarI cytidylyltransferase family. IspD subfamily.

The catalysed reaction is 2-C-methyl-D-erythritol 4-phosphate + CTP + H(+) = 4-CDP-2-C-methyl-D-erythritol + diphosphate. It participates in isoprenoid biosynthesis; isopentenyl diphosphate biosynthesis via DXP pathway; isopentenyl diphosphate from 1-deoxy-D-xylulose 5-phosphate: step 2/6. Functionally, catalyzes the formation of 4-diphosphocytidyl-2-C-methyl-D-erythritol from CTP and 2-C-methyl-D-erythritol 4-phosphate (MEP). This is 2-C-methyl-D-erythritol 4-phosphate cytidylyltransferase from Prochlorococcus marinus (strain MIT 9515).